A 2471-amino-acid polypeptide reads, in one-letter code: Probable polyketide synthase 24 (2471 aa).

The 429-residue stretch at 21–449 (ENLVAIVGVG…GSNCCLVLSQ (429 aa)) folds into the Ketosynthase family 3 (KS3) domain. Active-site for beta-ketoacyl synthase activity residues include cysteine 190, histidine 332, and histidine 372. The tract at residues 654 to 687 (GIKASFMLGHSLGEVTTAYCSGMIDIDQLCYLIY) is acyl/malonyl transferase. The active-site For acyl/malonyl transferase activity is the serine 664. Positions 953 to 1075 (ISILGNSMQD…SNFHLNSNDN (123 aa)) are N-terminal hotdog fold. A PKS/mFAS DH domain is found at 953-1245 (ISILGNSMQD…VKSLTPVKDP (293 aa)). Histidine 987 serves as the catalytic Proton acceptor; for dehydratase activity. The C-terminal hotdog fold stretch occupies residues 1094–1245 (NLSSIPWDEF…VKSLTPVKDP (152 aa)). Residue aspartate 1157 is the Proton donor; for dehydratase activity of the active site. The stretch at 1426–1469 (IINEQQQQQQQQQQQQQQQQQQQQQLLNNENNKESLKNLLVNCN) forms a coiled coil. The 78-residue stretch at 2336-2413 (SSSTNVKNKF…MVYQIINDSL (78 aa)) folds into the Carrier domain. Serine 2373 carries the O-(pantetheine 4'-phosphoryl)serine modification.

Requires pantetheine 4'-phosphate as cofactor.

Functionally, probable polyketide synthase. This is Probable polyketide synthase 24 (pks24) from Dictyostelium discoideum (Social amoeba).